Reading from the N-terminus, the 98-residue chain is NADH-ubiquinone oxidoreductase chain 4L (98 aa).

The next 3 membrane-spanning stretches (helical) occupy residues 2-22 (TLTT…TLIF), 29-49 (TLLC…ITAL), and 61-81 (ITTL…LTMV).

This sequence belongs to the complex I subunit 4L family. As to quaternary structure, core subunit of respiratory chain NADH dehydrogenase (Complex I) which is composed of 45 different subunits.

The protein localises to the mitochondrion inner membrane. The catalysed reaction is a ubiquinone + NADH + 5 H(+)(in) = a ubiquinol + NAD(+) + 4 H(+)(out). Functionally, core subunit of the mitochondrial membrane respiratory chain NADH dehydrogenase (Complex I) which catalyzes electron transfer from NADH through the respiratory chain, using ubiquinone as an electron acceptor. Part of the enzyme membrane arm which is embedded in the lipid bilayer and involved in proton translocation. The protein is NADH-ubiquinone oxidoreductase chain 4L (MT-ND4L) of Oxymycterus rufus (Red hocicudo).